The sequence spans 258 residues: Indole-3-glycerol phosphate synthase (258 aa).

Belongs to the TrpC family.

The catalysed reaction is 1-(2-carboxyphenylamino)-1-deoxy-D-ribulose 5-phosphate + H(+) = (1S,2R)-1-C-(indol-3-yl)glycerol 3-phosphate + CO2 + H2O. Its pathway is amino-acid biosynthesis; L-tryptophan biosynthesis; L-tryptophan from chorismate: step 4/5. The polypeptide is Indole-3-glycerol phosphate synthase (Exiguobacterium sibiricum (strain DSM 17290 / CCUG 55495 / CIP 109462 / JCM 13490 / 255-15)).